Reading from the N-terminus, the 421-residue chain is MDLEAKVKKMGLGHEQGFGAPCLKCKEKCEGFELHFWRKICRNCKCGQEEHDVLLSSEEDRKVGKLFEDTKYTTLIAKLKSDGIPMYKRNVMILTNPVPAKKNVSINTVTYEWAPPVQNQALARQYMQMLPKEKQPVAGSEGAQYRKKQLAKQLPEHDQDPSKCHELSPKEVKEMEQFVKKYKNEALGVGDVKLPSEMDAQAPNRICIPGGDRSTTAAVGAMEAKSGEHRRTQYSCYGCKLSMKEGDPAVYAERAGYNKLWHPACFICSTCCELLVDMIYFWKNGKLYCGRHYCDSEKPRCAGCDELIFSNEYTQAENQNWHLKHFCCFDCDNILAGEIYVMVNEKPVCKPCYVKNHAVVCQGCHNAIDPEVQRVTYNNFSWHASTECFLCSCCSKCLIGQKFMPVEGMVFCSVECKKMMS.

The PET domain maps to 92–199; it reads MILTNPVPAK…GDVKLPSEMD (108 aa). The interval 135–165 is disordered; the sequence is QPVAGSEGAQYRKKQLAKQLPEHDQDPSKCH. Basic and acidic residues predominate over residues 154 to 165; sequence LPEHDQDPSKCH. LIM zinc-binding domains follow at residues 234–297, 299–359, and 362–421; these read YSCY…CDSE, PRCA…NHAV, and QGCH…KMMS.

It belongs to the prickle / espinas / testin family. As to quaternary structure, interacts via LIM domain 1 with ZYX. Interacts (via LIM domain 3) with ENAH and VASP. Interacts with ALKBH4, talin, actin, alpha-actinin, GRIP1 and PXN. Interacts (via LIM domain 2) with ACTL7A (via N-terminus). Heterodimer with ACTL7A; the heterodimer interacts with ENAH to form a heterotrimer.

It localises to the cytoplasm. It is found in the cell junction. Its subcellular location is the focal adhesion. Its function is as follows. Scaffold protein that may play a role in cell adhesion, cell spreading and in the reorganization of the actin cytoskeleton. Plays a role in the regulation of cell proliferation. May act as a tumor suppressor. The chain is Testin (TES) from Dasypus novemcinctus (Nine-banded armadillo).